A 224-amino-acid polypeptide reads, in one-letter code: uncharacterized protein (224 aa).

Zn(2+)-binding residues include His-57, His-59, Asp-61, His-62, His-138, Asp-162, and His-203.

Belongs to the metallo-beta-lactamase superfamily. Glyoxalase II family. It depends on Zn(2+) as a cofactor.

This is an uncharacterized protein from Mycobacterium tuberculosis (strain CDC 1551 / Oshkosh).